We begin with the raw amino-acid sequence, 88 residues long: YcgL domain-containing protein CGSHiGG_01115 (88 aa).

Residues 1–85 (MLCAIYKSKK…QDDGLFNSLS (85 aa)) enclose the YcgL domain.

This Haemophilus influenzae (strain PittGG) protein is YcgL domain-containing protein CGSHiGG_01115.